The primary structure comprises 1982 residues: Ras guanine nucleotide exchange factor V (1982 aa).

LRR repeat units follow at residues 1-26, 47-68, 69-94, 105-128, 130-151, 164-187, 188-210, 212-234, 236-257, 261-284, 286-307, 308-330, 331-352, 354-376, and 378-399; these read MGNINSICLNNNGKYRIDSISCSLEG, LTQLLIIRECKLKQIPVNITNL, SNLSELILSDNKLSQLPWSLPPPFKP, NENLVRLDLSNNRFTEFPSSVFVL, NLKQLILCNNQLTNMNVTLCGG, ACQLEELKLSNNNFTIFPSIIGDQ, LTTLKSLDLSGNTITSLPNSFSN, VSLTSLNLKSNKFTCFPPSLCTL, KLVHLNLSCNQILVSPSDHTLG, LPSLEKLELQHNRFAHFPMDILEI, SLRVLKLQDNDIDKIPDKIGNL, LNLNELFLSENKITQLPSTIGEL, INLRKLYLEYNKIGSLPQEFSK, SKLNILILHNNDLKFVPDQLHSL, and QLLRLSLDENQLSSSDQKLIKS. Residues 1–1831 are Extracellular-facing; the sequence is MGNINSICLN…IANAFYELRN (1831 aa). 3 disordered regions span residues 414–436, 457–532, and 615–654; these read YGSTMNGTGTTSSSGSASTSTHG, NQIN…NKKQ, and NNSGGGDSMNGSGGNINNSGGSGSGCGTISGSTTKQRRGS. 2 stretches are compositionally biased toward low complexity: residues 415–436 and 457–495; these read GSTMNGTGTTSSSGSASTSTHG and NQINNNNNNNNNNNNNNNNNNNSSNNNSGTNSLSSTPNG. An LRR 16 repeat occupies 443–466; that stretch reads DILLSSVTLNNSILNQINNNNNNN. Polar residues predominate over residues 506–520; sequence LTISRSLFRGNSSNL. Residues 515-567 adopt a coiled-coil conformation; sequence GNSSNLESEKEDFINKKQQQQQQQQQQQQQQQQQQQQQQQQQQQQQQQQQQLG. The stretch at 592-615 is one LRR 17 repeat; the sequence is EDDIQKMQLGLEALSNLETSIGSN. Gly residues predominate over residues 616–642; the sequence is NSGGGDSMNGSGGNINNSGGSGSGCGT. LRR repeat units follow at residues 657-684 and 773-796; these read LPPTNAFKLSPNVVSSSYNTLPASVMSG and HSNLSQSLSINNLAHRLPTSLSSS. 2 disordered regions span residues 756 to 778 and 807 to 829; these read QSSTNSFLPPQHQHHHHHSNLSQ and LQFQQQQQHHHHNHNNHQNSNQP. The 405-residue stretch at 832 to 1236 folds into the GBD/FH3 domain; that stretch reads TIVPSFSKFK…QIKYSIDRYG (405 aa). 4 LRR repeats span residues 979–1003, 1075–1100, 1239–1263, and 1689–1712; these read LLGILQFNLDNAQLQFDEEKVGYCL, SPYVPLVALLRNPIIEMPTKTTVFKI, VPAIGSLVLDGSILQSSGSQSRWVD, and VQNMPAQSIEDDGLKELTELFVDL. Residues 1595 to 1717 enclose the N-terminal Ras-GEF domain; sequence KDRRVSSVTL…LFVDLSTKSY (123 aa). A Ras-GEF domain is found at 1747–1974; that stretch reads DEIEIARQLS…YEMSLSAEPR (228 aa). Residues 1832–1848 form a helical membrane-spanning segment; the sequence is YHLLMAIISGLNASPVL. Topologically, residues 1849–1982 are cytoplasmic; that stretch reads RLKYTKGKLS…PRNAERYDIQ (134 aa). LRR repeat units lie at residues 1865-1888 and 1917-1941; these read LDTLEELMSTQSSMKNYRADLAAA and RINFKKLEMYKKTIATLQNFSLFPY.

The protein localises to the membrane. Functionally, promotes the exchange of Ras-bound GDP by GTP. This chain is Ras guanine nucleotide exchange factor V (gefV), found in Dictyostelium discoideum (Social amoeba).